Reading from the N-terminus, the 230-residue chain is Ly6/PLAUR domain-containing protein 8 (230 aa).

The signal sequence occupies residues 1 to 20 (MKSFLFAGIVVVLTVAAVDT). N-linked (GlcNAc...) asparagine glycosylation is found at asparagine 37, asparagine 44, asparagine 74, asparagine 77, asparagine 90, asparagine 106, asparagine 110, asparagine 132, asparagine 137, asparagine 156, asparagine 168, asparagine 181, and asparagine 197. A UPAR/Ly6 domain is found at 125 to 172 (CPACYGNNETSCNETRKCYGERCVSIIAEFTNETKTLVLKGCSNVSIS). The GPI-anchor amidated serine moiety is linked to residue serine 211. A propeptide spans 212-230 (QASFTPLALASILLLSLLL) (removed in mature form).

It belongs to the CNF-like-inhibitor family. Post-translationally, highly N-glycosylated. Not O-glycosylated. In terms of processing, GPI-anchored. The GPI-anchor is cleaved, leading to secretion into the colonic lumen.

The protein localises to the cell membrane. It is found in the secreted. Secreted protein specifically required to prevent invasion of Gram-negative bacteria in the inner mucus layer of the colon epithelium, a portion of the large intestine which is free of commensal microbiota. Prevents invasion of flagellated microbiota by binding to the flagellum of bacteria, such as P.mirabilis, thereby inhibiting bacterial motility in the intestinal lumen. Segregation of intestinal bacteria and epithelial cells in the colon is required to preserve intestinal homeostasis. This is Ly6/PLAUR domain-containing protein 8 (LYPD8) from Bos taurus (Bovine).